The sequence spans 423 residues: GPI mannosyltransferase 2 (423 aa).

Helical transmembrane passes span leucine 7–glycine 27, valine 102–tyrosine 122, isoleucine 128–threonine 148, alanine 151–isoleucine 171, threonine 191–phenylalanine 211, phenylalanine 228–valine 248, leucine 298–valine 318, proline 333–phenylalanine 353, and tyrosine 400–tyrosine 420.

This sequence belongs to the PIGV family.

It localises to the endoplasmic reticulum membrane. It participates in glycolipid biosynthesis; glycosylphosphatidylinositol-anchor biosynthesis. Functionally, mannosyltransferase involved in glycosylphosphatidylinositol-anchor biosynthesis. Transfers the second mannose to the glycosylphosphatidylinositol during GPI precursor assembly. The sequence is that of GPI mannosyltransferase 2 (GPI18) from Cryptococcus neoformans var. neoformans serotype D (strain JEC21 / ATCC MYA-565) (Filobasidiella neoformans).